Here is a 129-residue protein sequence, read N- to C-terminus: Ribosome-binding factor A (129 aa).

The protein belongs to the RbfA family. Monomer. Binds 30S ribosomal subunits, but not 50S ribosomal subunits or 70S ribosomes.

The protein localises to the cytoplasm. In terms of biological role, one of several proteins that assist in the late maturation steps of the functional core of the 30S ribosomal subunit. Associates with free 30S ribosomal subunits (but not with 30S subunits that are part of 70S ribosomes or polysomes). Required for efficient processing of 16S rRNA. May interact with the 5'-terminal helix region of 16S rRNA. This chain is Ribosome-binding factor A, found in Gloeobacter violaceus (strain ATCC 29082 / PCC 7421).